The sequence spans 434 residues: 3-phosphoshikimate 1-carboxyvinyltransferase (434 aa).

Lys-22, Ser-23, and Arg-27 together coordinate 3-phosphoshikimate. Lys-22 lines the phosphoenolpyruvate pocket. Phosphoenolpyruvate contacts are provided by Gly-94 and Arg-122. 3-phosphoshikimate is bound by residues Ser-167, Gln-169, Asp-314, and Lys-341. Residue Gln-169 coordinates phosphoenolpyruvate. Asp-314 (proton acceptor) is an active-site residue. Phosphoenolpyruvate contacts are provided by Arg-345 and Arg-391.

The protein belongs to the EPSP synthase family. In terms of assembly, monomer.

The protein resides in the cytoplasm. It catalyses the reaction 3-phosphoshikimate + phosphoenolpyruvate = 5-O-(1-carboxyvinyl)-3-phosphoshikimate + phosphate. Its pathway is metabolic intermediate biosynthesis; chorismate biosynthesis; chorismate from D-erythrose 4-phosphate and phosphoenolpyruvate: step 6/7. In terms of biological role, catalyzes the transfer of the enolpyruvyl moiety of phosphoenolpyruvate (PEP) to the 5-hydroxyl of shikimate-3-phosphate (S3P) to produce enolpyruvyl shikimate-3-phosphate and inorganic phosphate. The sequence is that of 3-phosphoshikimate 1-carboxyvinyltransferase from Leuconostoc mesenteroides subsp. mesenteroides (strain ATCC 8293 / DSM 20343 / BCRC 11652 / CCM 1803 / JCM 6124 / NCDO 523 / NBRC 100496 / NCIMB 8023 / NCTC 12954 / NRRL B-1118 / 37Y).